The chain runs to 188 residues: MLVFAGLGNPGKTYENTRHNVGFMTIDELSKEWNIPLDKTKFNGQYGIGFVSGKKVLLVKPLTYMNLSGECLRPLLDYYEIPVDNLKVIYDDLDLPTGRIRLRTKGSAGGHNGIKSTIQHLGTSEFNRIRIGIGRPVNGMKVVDYVLGAFTDEEEPAIKEAVRQSAKACEASLEKPFLEVMNEFNAKV.

Position 14 (Y14) interacts with tRNA. Catalysis depends on H19, which acts as the Proton acceptor. Residues Y64, N66, and N112 each contribute to the tRNA site.

This sequence belongs to the PTH family. Monomer.

The protein localises to the cytoplasm. It carries out the reaction an N-acyl-L-alpha-aminoacyl-tRNA + H2O = an N-acyl-L-amino acid + a tRNA + H(+). Its function is as follows. Hydrolyzes ribosome-free peptidyl-tRNAs (with 1 or more amino acids incorporated), which drop off the ribosome during protein synthesis, or as a result of ribosome stalling. Catalyzes the release of premature peptidyl moieties from peptidyl-tRNA molecules trapped in stalled 50S ribosomal subunits, and thus maintains levels of free tRNAs and 50S ribosomes. This Bacillus licheniformis (strain ATCC 14580 / DSM 13 / JCM 2505 / CCUG 7422 / NBRC 12200 / NCIMB 9375 / NCTC 10341 / NRRL NRS-1264 / Gibson 46) protein is Peptidyl-tRNA hydrolase.